Here is a 120-residue protein sequence, read N- to C-terminus: UPF0231 protein YacL (120 aa).

Belongs to the UPF0231 family.

The chain is UPF0231 protein YacL from Escherichia coli (strain SMS-3-5 / SECEC).